We begin with the raw amino-acid sequence, 388 residues long: Dual-specificity RNA methyltransferase RlmN (388 aa).

The Proton acceptor role is filled by E109. One can recognise a Radical SAM core domain in the interval 115–354 (EDDRATLCVS…TIVRKTRGDD (240 aa)). C122 and C359 are oxidised to a cystine. [4Fe-4S] cluster is bound by residues C129, C133, and C136. Residues 183 to 184 (GE), S215, 237 to 239 (SLH), and N316 contribute to the S-adenosyl-L-methionine site. C359 acts as the S-methylcysteine intermediate in catalysis.

The protein belongs to the radical SAM superfamily. RlmN family. It depends on [4Fe-4S] cluster as a cofactor.

Its subcellular location is the cytoplasm. The enzyme catalyses adenosine(2503) in 23S rRNA + 2 reduced [2Fe-2S]-[ferredoxin] + 2 S-adenosyl-L-methionine = 2-methyladenosine(2503) in 23S rRNA + 5'-deoxyadenosine + L-methionine + 2 oxidized [2Fe-2S]-[ferredoxin] + S-adenosyl-L-homocysteine. The catalysed reaction is adenosine(37) in tRNA + 2 reduced [2Fe-2S]-[ferredoxin] + 2 S-adenosyl-L-methionine = 2-methyladenosine(37) in tRNA + 5'-deoxyadenosine + L-methionine + 2 oxidized [2Fe-2S]-[ferredoxin] + S-adenosyl-L-homocysteine. Its function is as follows. Specifically methylates position 2 of adenine 2503 in 23S rRNA and position 2 of adenine 37 in tRNAs. m2A2503 modification seems to play a crucial role in the proofreading step occurring at the peptidyl transferase center and thus would serve to optimize ribosomal fidelity. This is Dual-specificity RNA methyltransferase RlmN from Salmonella typhi.